The sequence spans 90 residues: Small ribosomal subunit protein uS15 (90 aa).

It belongs to the universal ribosomal protein uS15 family. Part of the 30S ribosomal subunit. Forms a bridge to the 50S subunit in the 70S ribosome, contacting the 23S rRNA.

One of the primary rRNA binding proteins, it binds directly to 16S rRNA where it helps nucleate assembly of the platform of the 30S subunit by binding and bridging several RNA helices of the 16S rRNA. Functionally, forms an intersubunit bridge (bridge B4) with the 23S rRNA of the 50S subunit in the ribosome. The sequence is that of Small ribosomal subunit protein uS15 from Campylobacter jejuni subsp. doylei (strain ATCC BAA-1458 / RM4099 / 269.97).